A 747-amino-acid chain; its full sequence is Probable type III restriction-modification enzyme HindVI Mod subunit (747 aa).

Residues 267–270 (DPPY) form a binding of S-adenosyl methionine region.

The protein belongs to the N(4)/N(6)-methyltransferase family. In terms of assembly, homodimer, also forms a functional restriction-competent complex with Res.

The catalysed reaction is a 2'-deoxyadenosine in DNA + S-adenosyl-L-methionine = an N(6)-methyl-2'-deoxyadenosine in DNA + S-adenosyl-L-homocysteine + H(+). Functionally, a beta subtype methylase that binds the system-specific DNA recognition site 5'-CGAAT-3' and methylates A-4 (of only 1 strand). DNA restriction requires both the Res and Mod subunits. The sequence is that of Probable type III restriction-modification enzyme HindVI Mod subunit from Haemophilus influenzae (strain ATCC 51907 / DSM 11121 / KW20 / Rd).